Here is a 581-residue protein sequence, read N- to C-terminus: Arginine--tRNA ligase (581 aa).

The 'HIGH' region signature appears at 126-136; it reads PNLAKEMHVGH.

This sequence belongs to the class-I aminoacyl-tRNA synthetase family. Monomer.

The protein resides in the cytoplasm. It carries out the reaction tRNA(Arg) + L-arginine + ATP = L-arginyl-tRNA(Arg) + AMP + diphosphate. This chain is Arginine--tRNA ligase, found in Shewanella amazonensis (strain ATCC BAA-1098 / SB2B).